We begin with the raw amino-acid sequence, 498 residues long: Cytochrome P450 monooxygenase aflU (498 aa).

A helical membrane pass occupies residues 5–27; the sequence is TVYTSLIGLLVALTVRSIYRVYF. 2 N-linked (GlcNAc...) asparagine glycosylation sites follow: N259 and N354. C438 lines the heme pocket.

The protein belongs to the cytochrome P450 family. Heme is required as a cofactor.

It is found in the membrane. It participates in mycotoxin biosynthesis; aflatoxin biosynthesis. Cytochrome P450 monooxygenase; part of the gene cluster that mediates the biosynthesis of aflatoxins, a group of polyketide-derived furanocoumarins, and part of the most toxic and carcinogenic compounds among the known mycotoxins. The four major aflatoxins produced by A.parasiticus are aflatoxin B1 (AFB1), aflatoxin B2 (AFB2), aflatoxin G1 (AFG1) and aflatoxin G2 (AFG2). Within the aflatoxin pathway, the cytochrome P450 monooxygenase aflU is involved in the last steps in which OMST is converted to aflatoxins B1 and G1, and DHOMST to aflatoxins B2 and G2. The biosynthesis of aflatoxins begins with the norsolorinic acid synthase aflC that combines a hexanoyl starter unit produced by the fatty acid synthase aflA/aflB and 7 malonyl-CoA extender units to synthesize the precursor NOR. The second step is the conversion of NOR to averantin and requires the norsolorinic acid ketoreductase aflD, which catalyzes the dehydration of norsolorinic acid to form (1'S)-averantin. The norsolorinic acid reductases aflE and aflF may also play a role in the conversion of NOR to AVN. The cytochrome P450 monooxygenase aflG then catalyzes the hydroxylation of AVN to 5'hydroxyaverantin (HAVN). The next step is performed by the 5'-hydroxyaverantin dehydrogenase aflH that transforms HAVN to 5'-oxoaverantin (OAVN) which is further converted to averufin (AVF) by aflK that plays a dual role in the pathway, as a 5'-oxoaverantin cyclase that mediates conversion of 5'-oxoaverantin, as well as a versicolorin B synthase in a later step in the pathway. The averufin oxidase aflI catalyzes the conversion of AVF to versiconal hemiacetal acetate (VHA). VHA is then the substrate for the versiconal hemiacetal acetate esterase aflJ to yield versiconal (VAL). Versicolorin B synthase aflK then converts VAL to versicolorin B (VERB) by closing the bisfuran ring of aflatoxin which is required for DNA-binding, thus giving to aflatoxin its activity as a mutagen. Then, the activity of the versicolorin B desaturase aflL leads to versicolorin A (VERA). A branch point starts from VERB since it can also be converted to dihydrodemethylsterigmatocystin (DMDHST), probably also by aflL, VERA being a precursor for aflatoxins B1 and G1, and DMDHST for aflatoxins B2 and G2. Next, the versicolorin reductase aflM and the cytochrome P450 monooxygenase aflN are involved in conversion of VERA to demethylsterigmatocystin (DMST). AflX and aflY seem also involved in this step, through probable aflX-mediated epoxide ring-opening step following versicolorin A oxidation and aflY-mediated Baeyer-Villiger oxidation required for the formation of the xanthone ring. The methyltransferase aflO then leads to the modification of DMST to sterigmatocystin (ST), and of DMDHST to dihydrosterigmatocystin (DHST). Both ST and DHST are then substrates of the O-methyltransferase aflP to yield O-methylsterigmatocystin (OMST) and dihydro-O-methylsterigmatocystin (DHOMST), respectively. Finally OMST is converted to aflatoxins B1 and G1, and DHOMST to aflatoxins B2 and G2, via the action of several enzymes including O-methylsterigmatocystin oxidoreductase aflQ, the cytochrome P450 monooxygenase aflU, but also the NADH-dependent flavin oxidoreductase nadA which is specifically required for the synthesis of AFG1. The sequence is that of Cytochrome P450 monooxygenase aflU from Aspergillus parasiticus (strain ATCC 56775 / NRRL 5862 / SRRC 143 / SU-1).